Consider the following 211-residue polypeptide: Regulator of G-protein signaling 2 (211 aa).

Positions 32–66 (KMKRTLLKDWKTRLSYFLQNSSAPGKPKTGKKSKQ) are necessary for membrane association. A necessary to inhibit protein synthesis region spans residues 79–116 (LWAEAFDELLASKYGLAAFRAFLKSEFCEENIEFWLAC). An RGS domain is found at 83 to 199 (AFDELLASKY…LESEFYQDLC (117 aa)).

Interacts with GNAQ. Does not interact with GNAI1 and GNAI3. Interacts with EIF2B5. Interacts with PRKG1 (isoform alpha). In terms of processing, phosphorylated by protein kinase C. Phosphorylation by PRKG1 leads to activation of RGS2 activity. In terms of tissue distribution, expressed in a wide variety of tissues.

The protein resides in the cell membrane. The protein localises to the cytoplasm. Its subcellular location is the nucleus. It localises to the nucleolus. Functionally, regulates G protein-coupled receptor signaling cascades. Inhibits signal transduction by increasing the GTPase activity of G protein alpha subunits, thereby driving them into their inactive GDP-bound form. It is involved in the negative regulation of the angiotensin-activated signaling pathway. Plays a role in the regulation of blood pressure in response to signaling via G protein-coupled receptors and GNAQ. Plays a role in regulating the constriction and relaxation of vascular smooth muscle. Binds EIF2B5 and blocks its activity, thereby inhibiting the translation of mRNA into protein. This Mus musculus (Mouse) protein is Regulator of G-protein signaling 2 (Rgs2).